The primary structure comprises 813 residues: LPS-assembly protein LptD (813 aa).

A disordered region spans residues 1-29; sequence MTEQRRSPNNRALPSPAPTSVPARARRAG. A signal peptide spans 1-52; that stretch reads MTEQRRSPNNRALPSPAPTSVPARARRAGGLHAGALRPLVLAMASLSAGAHA.

Belongs to the LptD family. In terms of assembly, component of the lipopolysaccharide transport and assembly complex. Interacts with LptE and LptA.

The protein localises to the cell outer membrane. Functionally, together with LptE, is involved in the assembly of lipopolysaccharide (LPS) at the surface of the outer membrane. In Cupriavidus necator (strain ATCC 17699 / DSM 428 / KCTC 22496 / NCIMB 10442 / H16 / Stanier 337) (Ralstonia eutropha), this protein is LPS-assembly protein LptD.